Consider the following 25-residue polypeptide: Hypotensin-2 (25 aa).

Residues 1 to 25 (AEIDFSGIPEDIIKEIKETNAKPPA) are disordered. At serine 6 the chain carries Phosphoserine. The span at 11–25 (DIIKEIKETNAKPPA) shows a compositional bias: basic and acidic residues.

The protein belongs to the non-disulfide-bridged peptide (NDBP) superfamily. Expressed by the venom gland.

Its subcellular location is the secreted. In terms of biological role, agonist of the B2 bradykinin receptor (BDKRB2). Potentiates the hypotensive effect of bradykinin (BK) and induces a direct vasorelaxing effect, independently of BK, by endothelium- and nitric oxide (NO)-dependent mechanisms in rat aortic ring preparations. Does not inhibit the angiotensin-converting enzyme (ACE). Also exerts proangiogenic, antiinflammatory, and antifibrogenic activities. Does not inhibit the angiotensin-converting enzyme (ACE) but weakly increases its activity, and weakly inhibits neprilysin (NEP) in a non-competitive manner. Exerts intermediate cytotoxicity and pro-inflammatory effects on mouse macrophages, and increases the phagocytic activity of these murine cells. Functionally, presents weak hemolytic activity at physiological concentrations (micromolar range), and weak lactate dehydrogenase (LDH) release from mast cells. Does not induce mast cell degranulation, and antimicrobial effects. In vivo, causes intense pain (but no edema formation), when injected in mice hind paws. Also induces discomfort and anxiety in mice, as it moderately diminishes locomotion and moderately increases rearing behavior. In Tityus serrulatus (Brazilian scorpion), this protein is Hypotensin-2.